A 482-amino-acid polypeptide reads, in one-letter code: Caspase-8 (482 aa).

A propeptide spanning residues 1 to 218 (MDFHSCLYDI…DMWDSPGEQE (218 aa)) is cleaved from the precursor. DED domains follow at residues 2-80 (DFHS…RVLK) and 100-177 (AYRV…RIDD). Ser-188 and Ser-213 each carry phosphoserine. His-319 is an active-site residue. Tyr-336 carries the phosphotyrosine modification. Cys-362 is an active-site residue. A propeptide spanning residues 379–388 (LEQEHVLEED) is cleaved from the precursor. At Ser-390 the chain carries Phosphoserine; by CDK1.

The protein belongs to the peptidase C14A family. As to quaternary structure, heterotetramer that consists of two anti-parallel arranged heterodimers, each one formed by a 18 kDa (p18) and a 10 kDa (p10) subunit. Component of the death-induced signaling complex (DISC) composed of cell surface receptor FAS/CD95 or TNFRSF1A, adapter protein FADD and the CASP8 protease; recruitment of CASP8 to the complex is required for processing of CASP8 into the p18 and p10 subunits. Component of the AIM2 PANoptosome complex, a multiprotein complex that drives inflammatory cell death (PANoptosis). Interacts with CFLAR and PEA15. Interacts with RFFL and RNF34; negatively regulate CASP8 through proteasomal degradation. Interacts with TNFAIP8L2. Interacts with CASP8AP2. Interacts with NOL3; decreases CASP8 activity in a mitochondria localization- and phosphorylation-dependent manner and this interaction is dissociated by calcium. Interacts with UBR2. Interacts with RIPK1. Interacts with stimulated TNFRSF10B; this interaction is followed by CASP8 proteolytic cleavage and activation. Post-translationally, generation of the subunits requires association with the death-inducing signaling complex (DISC), whereas additional processing is likely due to the autocatalytic activity of the activated protease. GZMB and CASP10 can be involved in these processing events. Phosphorylation on Ser-389 during mitosis by CDK1 inhibits activation by proteolysis and prevents apoptosis. This phosphorylation occurs in cancer cell lines, as well as in primary breast tissues and lymphocytes.

It is found in the cytoplasm. The protein localises to the nucleus. It catalyses the reaction Strict requirement for Asp at position P1 and has a preferred cleavage sequence of (Leu/Asp/Val)-Glu-Thr-Asp-|-(Gly/Ser/Ala).. Its activity is regulated as follows. CASP8 activity is restricted by RIPK1. Functionally, thiol protease that plays a key role in programmed cell death by acting as a molecular switch for apoptosis, necroptosis and pyroptosis, and is required to prevent tissue damage during embryonic development and adulthood. Initiator protease that induces extrinsic apoptosis by mediating cleavage and activation of effector caspases responsible for FAS/CD95-mediated and TNFRSF1A-induced cell death. Cleaves and activates effector caspases CASP3, CASP4, CASP6, CASP7, CASP9 and CASP10. Binding to the adapter molecule FADD recruits it to either receptor FAS/CD95 or TNFRSF1A. The resulting aggregate called the death-inducing signaling complex (DISC) performs CASP8 proteolytic activation. The active dimeric enzyme is then liberated from the DISC and free to activate downstream apoptotic proteases. Proteolytic fragments of the N-terminal propeptide (termed CAP3, CAP5 and CAP6) are likely retained in the DISC. In addition to extrinsic apoptosis, also acts as a negative regulator of necroptosis: acts by cleaving RIPK1 at 'Asp-325', which is crucial to inhibit RIPK1 kinase activity, limiting TNF-induced apoptosis, necroptosis and inflammatory response. Also able to initiate pyroptosis by mediating cleavage and activation of gasdermin-C and -D (GSDMC and GSDMD, respectively): gasdermin cleavage promotes release of the N-terminal moiety that binds to membranes and forms pores, triggering pyroptosis. Initiates pyroptosis following inactivation of MAP3K7/TAK1. Also acts as a regulator of innate immunity by mediating cleavage and inactivation of N4BP1 downstream of TLR3 or TLR4, thereby promoting cytokine production. May participate in the Granzyme B (GZMB) cell death pathways. Cleaves PARP1 and PARP2. This chain is Caspase-8, found in Rattus norvegicus (Rat).